Reading from the N-terminus, the 373-residue chain is 3 beta-hydroxysteroid dehydrogenase/Delta 5--&gt;4-isomerase type 6 (373 aa).

The active-site Proton acceptor is Tyr-155. Residue Lys-159 participates in NAD(+) binding. Residues 288–308 (VPLLYWLAFMLETVSFLLSPI) traverse the membrane as a helical segment.

This sequence belongs to the 3-beta-HSD family. Expressed in skin and testis.

Its subcellular location is the endoplasmic reticulum membrane. It localises to the mitochondrion membrane. It carries out the reaction a 3beta-hydroxy-Delta(5)-steroid + NAD(+) = a 3-oxo-Delta(5)-steroid + NADH + H(+). The enzyme catalyses a 3-oxo-Delta(5)-steroid = a 3-oxo-Delta(4)-steroid. Its pathway is lipid metabolism; steroid biosynthesis. Functionally, 3-beta-HSD is a bifunctional enzyme, that catalyzes the oxidative conversion of Delta(5)-ene-3-beta-hydroxy steroid, and the oxidative conversion of ketosteroids. The 3-beta-HSD enzymatic system plays a crucial role in the biosynthesis of all classes of hormonal steroids. May be involved in local production of progesterone. This is 3 beta-hydroxysteroid dehydrogenase/Delta 5--&gt;4-isomerase type 6 (Hsd3b6) from Mus musculus (Mouse).